A 367-amino-acid polypeptide reads, in one-letter code: Putative ionic transporter y4hA (367 aa).

11 consecutive transmembrane segments (helical) span residues 12–32 (VPLW…MTLA), 39–59 (SVVL…ASVH), 74–94 (AILL…SLML), 108–128 (VFAA…VLGG), 143–163 (AALA…NFVT), 172–192 (AIQL…FLFV), 221–241 (LAAG…AMLL), 249–269 (VEAL…VVLL), 291–311 (VLGS…AISV), 318–338 (ALGL…VGTI), and 347–367 (VLQG…SAIP).

This sequence belongs to the Ca(2+):cation antiporter (CaCA) (TC 2.A.19) family.

Its subcellular location is the cell membrane. In terms of biological role, possible cation transporter. The chain is Putative ionic transporter y4hA from Sinorhizobium fredii (strain NBRC 101917 / NGR234).